We begin with the raw amino-acid sequence, 574 residues long: MANTPHGGVLKDLIARDAPRHDQLEAEAATLPSIVLTERQLCDLELIMNGGFSPLEGFMNQKDYDGVVAESRLADGNLFSMPITLDASKAVIEQAGLKPGSRVTLRDFRDDRNLAILTIDDIYRPDKEKEAKLVFGGDPEHPAIKYLNTKVEEYYIGGKLEAVNKLNHYDYVGLRYTPAELRIHFDKLGWTRVVAFQTRNPMHRAHRELTVRAARARQANVLIHPVVGLTKPGDIDHFTRVRAYQALLPRYPNGMAALALLPLAMRMGGPREAVWHAIIRKNHGATHFIVGRDHAGPGKNSKGQEFYGPYDAQHAVEKYRAELGIEVVEFQQVTYLPDTDEYMPKDEVPAGTKTLDISGTELRNRLRTGAHIPEWFSYPEVVKILRESSPPRALQGFTIFLTGYMNSGKDAIARALQVTLNQQGGRSVTLLLGDTVRHELSSELGFSREDRHTNVQRIAFVAGELTRAGAAVIAAPIAPYEHSRKAAREAVQSTGGSFFLVHVNTPLEYCEATDKRGIYAKARRGEIKGFTGVDDPYEAPTNANLVVDVSKQSVRSIVHEIILMLESEGYFERL.

The tract at residues 1 to 169 is N-terminal; it reads MANTPHGGVL…LEAVNKLNHY (169 aa). A catalytic region spans residues 170 to 394; the sequence is DYVGLRYTPA…LRESSPPRAL (225 aa). Glutamine 197 lines the sulfate pocket. Residues 197 to 200 and 291 to 294 each bind ATP; these read QTRN and GRDH. Active-site residues include threonine 198, arginine 199, and asparagine 200. Arginine 199 contacts sulfate. Alanine 295 is a sulfate binding site. Valine 333 is an ATP binding site. Residues 395-574 form an allosteric regulation domain; adenylyl-sulfate kinase-like region; it reads QGFTIFLTGY…LESEGYFERL (180 aa). Residues 434 to 437, arginine 451, 477 to 478, and arginine 516 contribute to the 3'-phosphoadenylyl sulfate site; these read DTVR and IA.

This sequence in the N-terminal section; belongs to the sulfate adenylyltransferase family. The protein in the C-terminal section; belongs to the APS kinase family. Homohexamer. Dimer of trimers.

It localises to the cytoplasm. It catalyses the reaction sulfate + ATP + H(+) = adenosine 5'-phosphosulfate + diphosphate. The protein operates within sulfur metabolism; hydrogen sulfide biosynthesis; sulfite from sulfate: step 1/3. Its activity is regulated as follows. Allosterically inhibited by 3'-phosphoadenosine 5'-phosphosulfate (PAPS). In terms of biological role, catalyzes the first intracellular reaction of sulfate assimilation, forming adenosine-5'-phosphosulfate (APS) from inorganic sulfate and ATP. Plays an important role in sulfate activation as a component of the biosynthesis pathway of sulfur-containing amino acids. In Emericella nidulans (strain FGSC A4 / ATCC 38163 / CBS 112.46 / NRRL 194 / M139) (Aspergillus nidulans), this protein is Sulfate adenylyltransferase.